A 202-amino-acid polypeptide reads, in one-letter code: MCTPNDLAVLHAIFNPNVPFGNFDEQNVGDTEANADLDGRFSSAILQQAQDLERDGVKAAESEDMATAILKFSEAIALLPERASAYNNRAQALRLQGDVKGALEDLNQAVELSGIAGVAGRQALVQRGLILRLQGKDDEARKDFQRAAQLGSDFAKQQLILLNPYAALCNTMLRDMMQKLREPNGHKIQVGASTSLEDDREA.

TPR repeat units follow at residues 49 to 82 (AQDL…LPER), 83 to 116 (ASAY…SGIA), and 121 to 154 (RQAL…GSDF).

It belongs to the TTC36 family.

This Xenopus tropicalis (Western clawed frog) protein is Tetratricopeptide repeat protein 36 (ttc36).